Here is a 276-residue protein sequence, read N- to C-terminus: Glutamate racemase (276 aa).

Substrate is bound by residues 10 to 11 (DS) and 42 to 43 (YG). C74 acts as the Proton donor/acceptor in catalysis. A substrate-binding site is contributed by 75–76 (NT). C185 serves as the catalytic Proton donor/acceptor. 186–187 (TH) lines the substrate pocket.

Belongs to the aspartate/glutamate racemases family.

The enzyme catalyses L-glutamate = D-glutamate. It participates in cell wall biogenesis; peptidoglycan biosynthesis. Its function is as follows. Provides the (R)-glutamate required for cell wall biosynthesis. The protein is Glutamate racemase of Levilactobacillus brevis (Lactobacillus brevis).